The primary structure comprises 282 residues: Pantothenate synthetase (282 aa).

ATP is bound at residue 26 to 33 (MGNLHEGH). The Proton donor role is filled by His33. Position 57 (Gln57) interacts with (R)-pantoate. Gln57 is a binding site for beta-alanine. 148–151 (GKKD) contributes to the ATP binding site. Residue Gln154 coordinates (R)-pantoate. 185–188 (LSSR) is an ATP binding site.

It belongs to the pantothenate synthetase family. As to quaternary structure, homodimer.

It localises to the cytoplasm. It carries out the reaction (R)-pantoate + beta-alanine + ATP = (R)-pantothenate + AMP + diphosphate + H(+). It participates in cofactor biosynthesis; (R)-pantothenate biosynthesis; (R)-pantothenate from (R)-pantoate and beta-alanine: step 1/1. In terms of biological role, catalyzes the condensation of pantoate with beta-alanine in an ATP-dependent reaction via a pantoyl-adenylate intermediate. This Paracidovorax citrulli (strain AAC00-1) (Acidovorax citrulli) protein is Pantothenate synthetase.